A 545-amino-acid polypeptide reads, in one-letter code: MEIESVAAGSCSKENQMIYKEWFEFSDSDGDGRITGNDAIKFFTMSNLPRPELKQIWAIADSKRQGYLGFKEFIVAMQLVSLAQTGHEISHEVLISDVDFKNINPPTMEGLGVLMAKKKHSSKSSDPNMNGSPAADTSLTAHWFSSKSSKKISLSSVTSIVDGLKRLYIQKLKPLEVAYRFNDFVSPLLTNSDFDAKPMVMLLGQYSTGKTTFIKHLLKSTYPGAHIGPEPTTDRFVVVMSGPDERSIPGNTVAVQADMPFSGLTTFGTAFLSKFECSQMPHPLLEHVTFVDTPGVLSGEKQRTQRAYDFTGVTSWFASKCDLILLLFDPHKLDVSDEFKRVISSLRGHDDKIRVVLNKADQVDTQQLMRVYGALMWSLGKVLNTPEVSRVYIGSFSDKPINEAATGPIGRELFEKEQDDLLADLKDIPKKACDRRINEFVKRARAAKIHAYIISHLKKEMPAIMGKAKAQQKLIDNLEDEFGKVQREHHLPKGDFPNVDHFREVLSGYNIDKFEKLKPKMLQTVDDMLGYDIPELLKNFKNPYD.

EF-hand domains lie at 14-49 (ENQM…SNLP) and 50-83 (RPEL…VSLA). One can recognise an EH domain in the interval 15 to 93 (NQMIYKEWFE…QTGHEISHEV (79 aa)). Ca(2+)-binding residues include aspartate 27, aspartate 29, aspartate 31, arginine 33, aspartate 38, aspartate 61, tyrosine 67, and glutamate 72. Residues 194–429 (FDAKPMVMLL…DLLADLKDIP (236 aa)) enclose the Dynamin-type G domain. Positions 204-211 (GQYSTGKT) are G1 motif. Position 204–211 (204–211 (GQYSTGKT)) interacts with GTP. Residues 230 to 231 (EP) form a G2 motif region. The interval 292–295 (DTPG) is G3 motif. GTP is bound by residues 309–313 (DFTGV) and lysine 359. A G4 motif region spans residues 358 to 361 (NKAD). Valine 382 is a region of interest (G5 motif). 395 to 398 (SFSD) is a GTP binding site. The stretch at 467 to 490 (KAKAQQKLIDNLEDEFGKVQREHH) forms a coiled coil.

This sequence belongs to the TRAFAC class dynamin-like GTPase superfamily. Dynamin/Fzo/YdjA family. EHD subfamily. Homooligomer, and heterooligomer with EHD2.

Its subcellular location is the endosome membrane. The protein localises to the cell membrane. It localises to the cytoplasm. The enzyme catalyses GTP + H2O = GDP + phosphate + H(+). In terms of biological role, involved in endocytosis positive regulation. Acts in early endocytic membrane fusion and membrane trafficking of recycling endosomes. Confers salt tolerance. This is EH domain-containing protein 1 from Arabidopsis thaliana (Mouse-ear cress).